The sequence spans 359 residues: PWWP domain-containing protein 1 (359 aa).

A disordered region spans residues 1-37; the sequence is MNNARTNAKRRRLSSKQGGLSISEGKESNIPSVVEES. A PWWP domain is found at 52–114; sequence FGDRILVKAP…RNSVKPLLDS (63 aa). Disordered regions lie at residues 133–161 and 204–255; these read AYEASKTPPDLKEESSTDEEMDSLSAAEE and VAST…SPLN. The span at 204–224 shows a compositional bias: polar residues; that stretch reads VASTSRSSTQLSDQRYPLSSN. Residue S252 is modified to Phosphoserine.

As to quaternary structure, interacts with set9 and histone H4K20me1. Associates with nucleosomes.

It localises to the nucleus. Necessary for DNA damage checkpoint activation. Required for the association of set9 with chromatin and subsequent methylation of H4K20. Associates with H4K20me1 to increase the concentration of set9 on chromatin to perform H4K20me3. H4K20me3 is mainly enriched at heterochromatin and is required for proper heterochromatin assembly. The polypeptide is PWWP domain-containing protein 1 (pdp1) (Schizosaccharomyces pombe (strain 972 / ATCC 24843) (Fission yeast)).